A 241-amino-acid chain; its full sequence is Venom nerve growth factor 2 (241 aa).

A signal peptide spans 1–18; sequence MSMLCYTLITAFLIGIWA. Positions 19–125 are excised as a propeptide; that stretch reads APKSEDNVPL…SLNRNIRAKR (107 aa). The tract at residues 47 to 67 is disordered; it reads GLKTSRNTDQRHPAPQKAEDQ. Intrachain disulfides connect C139–C203, C181–C231, and C191–C233.

The protein belongs to the NGF-beta family. As to quaternary structure, homodimer; non-covalently linked. As to expression, expressed by the venom gland.

It localises to the secreted. Functionally, nerve growth factor is important for the development and maintenance of the sympathetic and sensory nervous systems. It stimulates division and differentiation of sympathetic and embryonic sensory neurons as well as basal forebrain cholinergic neurons in the brain. Its relevance in the snake venom is not clear. However, it has been shown to inhibit metalloproteinase-dependent proteolysis of platelet glycoprotein Ib alpha, suggesting a metalloproteinase inhibition to prevent metalloprotease autodigestion and/or protection against prey proteases. Binds a lipid between the two protein chains in the homodimer. The lipid-bound form promotes histamine relase from mouse mast cells, contrary to the lipid-free form. This is Venom nerve growth factor 2 from Naja sputatrix (Malayan spitting cobra).